Reading from the N-terminus, the 405-residue chain is Elongation factor Tu (405 aa).

Residues 10–213 form the tr-type G domain; the sequence is KEHVNVGTIG…AMDEYIPTPE (204 aa). The G1 stretch occupies residues 19–26; the sequence is GHVDHGKS. 19–26 contacts GTP; that stretch reads GHVDHGKS. Serine 26 is a Mg(2+) binding site. The segment at 64–68 is G2; that stretch reads GITIN. The G3 stretch occupies residues 85-88; the sequence is DCPG. Residues 85 to 89 and 140 to 143 contribute to the GTP site; these read DCPGH and NKCD. The G4 stretch occupies residues 140–143; sequence NKCD. Residues 178 to 180 form a G5 region; the sequence is SAL.

It belongs to the TRAFAC class translation factor GTPase superfamily. Classic translation factor GTPase family. EF-Tu/EF-1A subfamily. In terms of assembly, monomer.

It is found in the cytoplasm. It carries out the reaction GTP + H2O = GDP + phosphate + H(+). In terms of biological role, GTP hydrolase that promotes the GTP-dependent binding of aminoacyl-tRNA to the A-site of ribosomes during protein biosynthesis. The sequence is that of Elongation factor Tu from Aquifex pyrophilus.